We begin with the raw amino-acid sequence, 516 residues long: Adenine DNA glycosylase (516 aa).

Basic residues predominate over residues 1-23 (MKKLRASVRSHKKQPANHKRRGK). The disordered stretch occupies residues 1-38 (MKKLRASVRSHKKQPANHKRRGKCALSSSQAKPSGLDG). Residue Glu-105 is the Proton donor/acceptor of the active site. Positions 261, 268, 271, and 277 each coordinate [4Fe-4S] cluster. Residues 335 to 467 (PREEYSATCV…AMKKVFRVYE (133 aa)) form the Nudix hydrolase domain. The short motif at 376–398 (VTLEPSGQHQHKALLQELQHWSA) is the Nudix box element. Residues 474–516 (CKGSKRPQVCTPSSRKKPSRGQQVLDRFFQRHIPTHKPNSTTQ) are disordered.

This sequence belongs to the Nth/MutY family. Requires [4Fe-4S] cluster as cofactor. In terms of tissue distribution, expressed in brain, spleen, heart, liver and kidney.

The protein resides in the nucleus. It is found in the mitochondrion. It catalyses the reaction Hydrolyzes free adenine bases from 7,8-dihydro-8-oxoguanine:adenine mismatched double-stranded DNA, leaving an apurinic site.. Involved in oxidative DNA damage repair. Initiates repair of A*oxoG to C*G by removing the inappropriately paired adenine base from the DNA backbone. Possesses both adenine and 2-OH-A DNA glycosylase activities. This is Adenine DNA glycosylase (Mutyh) from Rattus norvegicus (Rat).